The following is an 84-amino-acid chain: Small ribosomal subunit protein bS18 (84 aa).

This sequence belongs to the bacterial ribosomal protein bS18 family. In terms of assembly, part of the 30S ribosomal subunit. Forms a tight heterodimer with protein bS6.

Binds as a heterodimer with protein bS6 to the central domain of the 16S rRNA, where it helps stabilize the platform of the 30S subunit. The protein is Small ribosomal subunit protein bS18 of Maricaulis maris (strain MCS10) (Caulobacter maris).